Here is a 1065-residue protein sequence, read N- to C-terminus: Alpha-L-arabinofuranosidase (1065 aa).

The N-terminal stretch at Met-1–Ala-26 is a signal peptide. The BIG2 domain maps to Val-277–Glu-346. Residues Lys-997 to Ser-1031 are disordered. A compositionally biased stretch (polar residues) spans Lys-1014 to Ser-1031. A helical transmembrane segment spans residues Val-1040–Trp-1060.

This sequence belongs to the glycosyl hydrolase 43 family.

It is found in the cell membrane. It catalyses the reaction Hydrolysis of terminal non-reducing alpha-L-arabinofuranoside residues in alpha-L-arabinosides.. Involved in the type II arabinogalactan (AG) side chains degradation. Releases arabinofuranose (Araf) from alpha-1,3-Araf-substituted beta-1,6-galactooligosaccharides. Can use radish root AGP, larch AG and arabinan. Shows weaker activity with gum arabic and arabinoxylan. This Bifidobacterium longum subsp. longum (strain ATCC 15707 / DSM 20219 / JCM 1217 / NCTC 11818 / E194b) protein is Alpha-L-arabinofuranosidase.